A 422-amino-acid chain; its full sequence is Glucose-1-phosphate adenylyltransferase (422 aa).

Alpha-D-glucose 1-phosphate-binding positions include Tyr108, Gly173, 188–189, and Ser206; that span reads EK.

Belongs to the bacterial/plant glucose-1-phosphate adenylyltransferase family. Homotetramer.

It carries out the reaction alpha-D-glucose 1-phosphate + ATP + H(+) = ADP-alpha-D-glucose + diphosphate. Its pathway is glycan biosynthesis; glycogen biosynthesis. Its function is as follows. Involved in the biosynthesis of ADP-glucose, a building block required for the elongation reactions to produce glycogen. Catalyzes the reaction between ATP and alpha-D-glucose 1-phosphate (G1P) to produce pyrophosphate and ADP-Glc. This chain is Glucose-1-phosphate adenylyltransferase, found in Paraburkholderia phymatum (strain DSM 17167 / CIP 108236 / LMG 21445 / STM815) (Burkholderia phymatum).